The primary structure comprises 718 residues: Heat shock 70 kDa protein 7, chloroplastic (718 aa).

Residues 1-92 (MASSAAQIHI…IDLGTTNSAV (92 aa)) constitute a chloroplast transit peptide. Over residues 668–678 (QIGQSLYNQPQ) the composition is skewed to polar residues. The tract at residues 668–718 (QIGQSLYNQPQPGGADSPPGGEASSSSDTSSSAKGGDNGGDVIDADFTDSN) is disordered.

The protein belongs to the heat shock protein 70 (TC 1.A.33) family. DnaK subfamily.

Its subcellular location is the plastid. The protein resides in the chloroplast stroma. Functionally, acts redundantly with HSP70-6 in the thermotolerance of germinating seeds. Plays an important role in the protein precursor import into chloroplasts. In terms of biological role, in cooperation with other chaperones, Hsp70s are key components that facilitate folding of de novo synthesized proteins, assist translocation of precursor proteins into organelles, and are responsible for degradation of damaged protein under stress conditions. In Arabidopsis thaliana (Mouse-ear cress), this protein is Heat shock 70 kDa protein 7, chloroplastic (HSP70-7).